A 746-amino-acid polypeptide reads, in one-letter code: Rhizobactin receptor (746 aa).

Residues methionine 1–alanine 26 form the signal peptide. The short motif at glutamate 40–glycine 47 is the TonB box element. Positions glutamine 52–lysine 163 constitute a TBDR plug domain. Positions glutamate 169–phenylalanine 746 constitute a TBDR beta-barrel domain. Residues phenylalanine 729–phenylalanine 746 carry the TonB C-terminal box motif.

This sequence belongs to the TonB-dependent receptor family.

The protein localises to the cell outer membrane. In terms of biological role, receptor for the siderophore rhizobactin. The polypeptide is Rhizobactin receptor (rhtA) (Rhizobium meliloti (strain 1021) (Ensifer meliloti)).